Reading from the N-terminus, the 260-residue chain is Granzyme A (260 aa).

Residues Met1 to Cys26 form the signal peptide. A propeptide spans Glu27–Arg28 (activation peptide). Residues Ile29–Lys257 enclose the Peptidase S1 domain. A disulfide bridge links Cys54 with Cys70. Active-site charge relay system residues include His69 and Asp113. Cystine bridges form between Cys147–Cys217, Cys178–Cys196, and Cys207–Cys232. Asn157 and Asn169 each carry an N-linked (GlcNAc...) asparagine glycan. Ser211 acts as the Charge relay system in catalysis.

Belongs to the peptidase S1 family. Granzyme subfamily. As to quaternary structure, homodimer; disulfide-linked. Interacts with APEX1. Found in cytotoxic lymphocytes and in normal lymphoid tissues such as thymus and spleen. As to expression, more abundant in lymphoid tissues than isoform HF2.

It is found in the secreted. Its subcellular location is the cytoplasmic granule. It carries out the reaction Hydrolysis of proteins, including fibronectin, type IV collagen and nucleolin. Preferential cleavage: -Arg-|-Xaa-, -Lys-|-Xaa- &gt;&gt; -Phe-|-Xaa- in small molecule substrates.. Its function is as follows. Abundant protease in the cytosolic granules of cytotoxic T-cells and NK-cells which activates caspase-independent pyroptosis when delivered into the target cell through the immunological synapse. It cleaves after Lys or Arg. Cleaves APEX1 after 'Lys-31' and destroys its oxidative repair activity. Cleaves the nucleosome assembly protein SET after 'Lys-189', which disrupts its nucleosome assembly activity and allows the SET complex to translocate into the nucleus to nick and degrade the DNA. This is Granzyme A (Gzma) from Mus musculus (Mouse).